Reading from the N-terminus, the 674-residue chain is MTIATPEIQQRVQQLRQQLQKANYAYYVLDNPIMEDSVYDQLYRELQDLESQYPILITPDSPTQRVGDQPAAQFNSIRHNIPLYSLENAFNLQELQKWEERWQRYDQVSNSDYVCELKIDGSALALTYEDGILIRGVTRGDGITGEEITQNVRTIRSIPLKLTLENPPSRVEIRGEAFLPLNEFDRLNGERKQAGEPLFANPRNAAAGTLRQLDSKVVSERRLQFFAYTLHLPEDNSLSSQWESLEWLKKMGFLVNPNCQLCPTLEAVADYFRHWETARHDLPYMTDGVVVKINDYALQNQLGFTQKFPRWAIALKYPAEEAPTRVKEIIVNVGRTGAVTPMAIMEPVHLGGTIVQRATLHNSDRVSELDIRVGDTVIIRKAGEIIPEVLRVLPELRLPNSRPYQMPSHCPECGSTLVRPVGEAVTRCVNSSCPAILRGSVVHWASRDALDIRGLGEKIVSLLVENELITSIADLYQLTPEKVAALDRMGTKSAQKLINAIEGSKRQSWPRVLYGLGIRYVGNVTAKLLTDNFPSVEVLSQASVPTLASVYGVGEEIAQSVFDWFKIVENQTLIEQLKIAGLQLENIASQAVSLTPSSGNIAGKTFVLTGTLPTLKRNEAKALIEKAGGKVTGSISSKTDYLVVGEEAGSKLAKAQELGITQLSEADLLKFLTN.

Residues 36–40 (DSVYD), 85–86 (SL), and E116 each bind NAD(+). The active-site N6-AMP-lysine intermediate is K118. R139, E176, K292, and K316 together coordinate NAD(+). The Zn(2+) site is built by C410, C413, C428, and C433. Residues 596–674 (PSSGNIAGKT…EADLLKFLTN (79 aa)) enclose the BRCT domain.

Belongs to the NAD-dependent DNA ligase family. LigA subfamily. Requires Mg(2+) as cofactor. Mn(2+) is required as a cofactor.

The enzyme catalyses NAD(+) + (deoxyribonucleotide)n-3'-hydroxyl + 5'-phospho-(deoxyribonucleotide)m = (deoxyribonucleotide)n+m + AMP + beta-nicotinamide D-nucleotide.. Its function is as follows. DNA ligase that catalyzes the formation of phosphodiester linkages between 5'-phosphoryl and 3'-hydroxyl groups in double-stranded DNA using NAD as a coenzyme and as the energy source for the reaction. It is essential for DNA replication and repair of damaged DNA. This chain is DNA ligase, found in Rippkaea orientalis (strain PCC 8801 / RF-1) (Cyanothece sp. (strain PCC 8801)).